The primary structure comprises 149 residues: Large ribosomal subunit protein eL19 (149 aa).

Residues 55–69 (KGISSARKKEVQEQK) show a composition bias toward basic and acidic residues. The disordered stretch occupies residues 55–93 (KGISSARKKEVQEQKRKGKRKGPGSRRGAKGARTPKKEK). Over residues 70-88 (RKGKRKGPGSRRGAKGART) the composition is skewed to basic residues.

It belongs to the eukaryotic ribosomal protein eL19 family. Part of the 50S ribosomal subunit.

In terms of biological role, binds to the 23S rRNA. The chain is Large ribosomal subunit protein eL19 from Methanococcus vannielii.